A 328-amino-acid chain; its full sequence is RNA binding protein fox-1 homolog 3 (328 aa).

The span at 1-30 (MAQPYPPAQYPPPPQNGIPAEYAPPPPHPT) shows a compositional bias: pro residues. The segment at 1–106 (MAQPYPPAQY…QPKRLHVSNI (106 aa)) is disordered. Residues 49-87 (TPAQTHPEQPSSDTSTQPITGAQTVPQTDEAAQTDSQPL) show a composition bias toward polar residues. In terms of domain architecture, RRM spans 99-172 (KRLHVSNIPF…NPVVGAVYGP (74 aa)). Arg-192 carries the post-translational modification Asymmetric dimethylarginine; alternate. Arg-192 carries the post-translational modification Omega-N-methylarginine; alternate. The residue at position 288 (Arg-288) is an Asymmetric dimethylarginine.

It is found in the nucleus. It localises to the cytoplasm. Functionally, pre-mRNA alternative splicing regulator. Regulates alternative splicing of RBFOX2 to enhance the production of mRNA species that are targeted for nonsense-mediated decay (NMD). In Bos taurus (Bovine), this protein is RNA binding protein fox-1 homolog 3 (RBFOX3).